The chain runs to 103 residues: High-potential iron-sulfur protein (103 aa).

Residues 1–28 form the signal peptide; sequence MSNRRLFLKSIPIMAAAGAVGMAGLARA. Residues Cys-66, Cys-69, Cys-82, and Cys-96 each coordinate [4Fe-4S] cluster.

This sequence belongs to the high-potential iron-sulfur protein (HiPIP) family. Homodimer.

It is found in the periplasm. Its function is as follows. Specific class of high-redox-potential 4Fe-4S ferredoxins. Functions in anaerobic electron transport in most purple and in some other photosynthetic bacteria and in at least one genus (Paracoccus) of halophilic, denitrifying bacteria. This is High-potential iron-sulfur protein (hip) from Ralstonia nicotianae (strain ATCC BAA-1114 / GMI1000) (Ralstonia solanacearum).